Here is a 446-residue protein sequence, read N- to C-terminus: MSSSVWQERRHGEDKQRRNDHRSPFQRDRARILHSAAFRRLQAKTQVLGVGMNDFYRTRLTHSLEVSQIGTGIAAQLSRKYPEHKPLLGSMSLLESLCLAHDIGHPPFGHGGEVALNYMMRHHGGFEGNGQTFRILSKLEPYTEAFGMNLCRRTMLGILKYPAPQSLLFVPGSHPEITNHRQLKPSQWPPVKGIFDDDSDIFDWVLEPLSVADRARFTSVQPSLQPNYPHLRTQFKSFDCSIMELADDIAYAVHDLEDAIVMGIVTASQWQQDVAPTLKHSGDPWIRQELADIGTKLFSHEHHLRKDAIGTLVNGFVTAIIINDDPAFEEPLLRFNASLEPEFANALNVLKQLVFKYVIRKPEIQMLEYKGQQIVMGLFEAFASDPERLLPLNTQERWRTSELQGQNSHRVLADYISGMTDEFAGRLYQQLFSPKAGSNVELSKEM.

The tract at residues 1 to 28 (MSSSVWQERRHGEDKQRRNDHRSPFQRD) is disordered. A compositionally biased stretch (basic and acidic residues) spans 7-28 (QERRHGEDKQRRNDHRSPFQRD). In terms of domain architecture, HD spans 59–252 (RLTHSLEVSQ…MELADDIAYA (194 aa)).

It belongs to the dGTPase family. Type 2 subfamily.

This chain is Deoxyguanosinetriphosphate triphosphohydrolase-like protein, found in Shewanella sp. (strain MR-4).